We begin with the raw amino-acid sequence, 44 residues long: Cytochrome b559 subunit beta (44 aa).

The chain crosses the membrane as a helical span at residues 19 to 35 (WIAVHTLAVPSVFFLGA). His-23 lines the heme pocket.

This sequence belongs to the PsbE/PsbF family. In terms of assembly, heterodimer of an alpha subunit and a beta subunit. PSII is composed of 1 copy each of membrane proteins PsbA, PsbB, PsbC, PsbD, PsbE, PsbF, PsbH, PsbI, PsbJ, PsbK, PsbL, PsbM, PsbT, PsbX, PsbY, PsbZ, Psb30/Ycf12, peripheral proteins PsbO, CyanoQ (PsbQ), PsbU, PsbV and a large number of cofactors. It forms dimeric complexes. Heme b is required as a cofactor.

The protein resides in the cellular thylakoid membrane. This b-type cytochrome is tightly associated with the reaction center of photosystem II (PSII). PSII is a light-driven water:plastoquinone oxidoreductase that uses light energy to abstract electrons from H(2)O, generating O(2) and a proton gradient subsequently used for ATP formation. It consists of a core antenna complex that captures photons, and an electron transfer chain that converts photonic excitation into a charge separation. The protein is Cytochrome b559 subunit beta of Cyanothece sp. (strain PCC 7425 / ATCC 29141).